Here is a 236-residue protein sequence, read N- to C-terminus: Cytochrome c biogenesis ATP-binding export protein CcmA (236 aa).

One can recognise an ABC transporter domain in the interval 14–235 (LEATGLQVAR…SAGDRVTGTE (222 aa)). ATP is bound at residue 46–53 (GANGSGKT).

It belongs to the ABC transporter superfamily. CcmA exporter (TC 3.A.1.107) family. As to quaternary structure, the complex is composed of two ATP-binding proteins (CcmA) and two transmembrane proteins (CcmB).

It is found in the cell inner membrane. The enzyme catalyses heme b(in) + ATP + H2O = heme b(out) + ADP + phosphate + H(+). In terms of biological role, part of the ABC transporter complex CcmAB involved in the biogenesis of c-type cytochromes; once thought to export heme, this seems not to be the case, but its exact role is uncertain. Responsible for energy coupling to the transport system. This is Cytochrome c biogenesis ATP-binding export protein CcmA from Alkalilimnicola ehrlichii (strain ATCC BAA-1101 / DSM 17681 / MLHE-1).